Consider the following 303-residue polypeptide: Quinolinate synthase (303 aa).

Iminosuccinate-binding residues include histidine 24 and serine 41. Residue cysteine 86 coordinates [4Fe-4S] cluster. Iminosuccinate contacts are provided by residues 112–114 (YVN) and serine 129. Cysteine 172 lines the [4Fe-4S] cluster pocket. Residues 198-200 (HPE) and threonine 215 each bind iminosuccinate. Cysteine 260 provides a ligand contact to [4Fe-4S] cluster.

Belongs to the quinolinate synthase family. Type 2 subfamily. Requires [4Fe-4S] cluster as cofactor.

The protein localises to the cytoplasm. The enzyme catalyses iminosuccinate + dihydroxyacetone phosphate = quinolinate + phosphate + 2 H2O + H(+). It participates in cofactor biosynthesis; NAD(+) biosynthesis; quinolinate from iminoaspartate: step 1/1. In terms of biological role, catalyzes the condensation of iminoaspartate with dihydroxyacetone phosphate to form quinolinate. This is Quinolinate synthase from Clostridium kluyveri (strain NBRC 12016).